Consider the following 650-residue polypeptide: Sodium-dependent phosphate transporter 2 (650 aa).

The Extracellular portion of the chain corresponds to 1-5; that stretch reads MAMDG. A helical transmembrane segment spans residues 6-26; it reads YLWMVILGFIIAFILAFSVGA. Topologically, residues 27–46 are cytoplasmic; it reads NDVANSFGTAVGSGVVTLRQ. The chain crosses the membrane as a helical span at residues 47-67; that stretch reads ACILASIFETTGSVLLGAKVG. The Extracellular segment spans residues 68-83; sequence ETIRKGIIDVNLYNDT. Asn-81 carries an N-linked (GlcNAc...) asparagine glycan. The chain crosses the membrane as a helical span at residues 84–104; the sequence is VVTLMAGEVSAMVGSAVWQLI. Residues 105-109 lie on the Cytoplasmic side of the membrane; the sequence is ASFLR. The chain crosses the membrane as a helical span at residues 110 to 130; sequence LPISGTHCIVGSTIGFSLVAN. The Extracellular segment spans residues 131 to 142; sequence GTKGVQWMELVK. The helical transmembrane segment at 143 to 163 threads the bilayer; it reads IVASWFISPLLSGFMSGVLFV. The Cytoplasmic portion of the chain corresponds to 164–192; the sequence is LIRMFILTKEDPVPNGLQALPLFYAATIA. Residues 193 to 212 traverse the membrane as a helical segment; the sequence is INVFSIMYTGAPVLGLSLPI. Residue Trp-213 is a topological domain, extracellular. A helical transmembrane segment spans residues 214–234; it reads AIALISFGVALLFAFFVWLFV. The Cytoplasmic portion of the chain corresponds to 235–482; sequence CPWMRRKIAG…EEKEEKDTAE (248 aa). Ser-253, Ser-256, Ser-259, Ser-268, Ser-315, and Ser-384 each carry phosphoserine. The tract at residues 268–310 is disordered; the sequence is SPFKELPGAKASDDSAVPLTNPTGEAVGPSEGTSTGNHPRTAY. The chain crosses the membrane as a helical span at residues 483-503; sequence VHLLFHFLQVLTACFGSFAHG. Residues 504-530 lie on the Extracellular side of the membrane; sequence GNDVSNAIGPLVALWLIYEQGGVMQEA. The helical transmembrane segment at 531 to 551 threads the bilayer; it reads ATPVWLLFYGGVGICTGLWVW. Topologically, residues 552–571 are cytoplasmic; it reads GRRVIQTMGKDLTPITPSSG. Residues 572 to 586 form a helical membrane-spanning segment; sequence FTIELASAFTVVIAS. The Extracellular portion of the chain corresponds to 587–593; that stretch reads NIGLPVS. A helical membrane pass occupies residues 594 to 609; the sequence is TTHCKVGSVVAVGWIR. At 610-621 the chain is on the cytoplasmic side; sequence SRKAVDWHLFRN. Residues 622–642 form a helical membrane-spanning segment; that stretch reads IFVAWFVTVPVAGLFSAAIMA. Residues 643–650 lie on the Extracellular side of the membrane; sequence IFMYGILS.

Belongs to the inorganic phosphate transporter (PiT) (TC 2.A.20) family. As to quaternary structure, homodimer.

It is found in the cell membrane. Its subcellular location is the apical cell membrane. The enzyme catalyses 2 Na(+)(out) + phosphate(out) = 2 Na(+)(in) + phosphate(in). Functionally, sodium-phosphate symporter which preferentially transports the monovalent form of phosphate with a stoichiometry of two sodium ions per phosphate ion. Plays a critical role in the determination of bone quality and strength by providing phosphate for bone mineralization. Required to maintain normal cerebrospinal fluid phosphate levels. Mediates phosphate-induced calcification of vascular smooth muscle cells (VCMCs) and can functionally compensate for loss of SLC20A1 in VCMCs. (Microbial infection) Functions as a retroviral receptor and confers hamster cells susceptibility to infection to Gibbon Ape Leukemia Virus (GaLV) and amphotropic murine leukemia virus (A-MuLV). The protein is Sodium-dependent phosphate transporter 2 (SLC20A2) of Cricetulus griseus (Chinese hamster).